The chain runs to 346 residues: Integrin beta-1-binding protein 2 (346 aa).

Cys-5, Cys-10, Cys-24, and His-27 together coordinate Zn(2+). The 60-residue stretch at 5-64 (CHNKGCGQHFDPQTNLPDSCCHHPGVPVFHDALKGWSCCRKRTVDFSEFLNIKGCTVGPH) folds into the CHORD 1 domain. The SH3-binding signature appears at 28-31 (PGVP). Zn(2+)-binding residues include Cys-42, Cys-43, Cys-59, and His-64. Residues 70 to 78 (PEAPQPEGP) carry the SH3-binding motif. The interval 70 to 113 (PEAPQPEGPATSSSLLEQKPPNTIPKSAETLRRERPKSDLPPKL) is disordered. Residues 79–94 (ATSSSLLEQKPPNTIP) show a composition bias toward polar residues. Residues 98–109 (ETLRRERPKSDL) show a composition bias toward basic and acidic residues. Residues Cys-150 and Cys-155 each coordinate Zn(2+). The 60-residue stretch at 150-209 (CQNPGCDAVYQGSESDATPCTYHPGAPRFHEGMKSWSCCGIQTLDFGVFLAQPGCRVGRH) folds into the CHORD 2 domain. Positions 159–162 (YQGS) match the SH2-binding motif. 2 residues coordinate Zn(2+): Cys-169 and His-172. The short motif at 173–176 (PGAP) is the SH3-binding element. Zn(2+)-binding residues include Cys-187, Cys-188, Cys-204, and His-209. A CS domain is found at 216 to 305 (LASCRHDWHQ…ADPGFWAQLE (90 aa)). Positions 235–238 (YGQI) match the SH2-binding motif. The tract at residues 311–346 (AEKSKSGVGLEMDEEESEDSDDDLSWTEEEEEAMGE) is disordered. The span at 321–346 (EMDEEESEDSDDDLSWTEEEEEAMGE) shows a compositional bias: acidic residues.

Interacts with beta-1 integrin subunit. This interaction is regulated by divalent cations, and it occurs only in absence of calcium.

In terms of biological role, may play a role during maturation and/or organization of muscles cells. The protein is Integrin beta-1-binding protein 2 (ITGB1BP2) of Sus scrofa (Pig).